The following is a 206-amino-acid chain: Small ribosomal subunit protein uS4 (206 aa).

Positions 15 to 46 (MGENIWGRPKSPVNKREYGPGQHGQRRKNKLS) are disordered. Residues 94 to 157 (RRLDAIVYRA…RQLAIVLEAT (64 aa)) enclose the S4 RNA-binding domain.

Belongs to the universal ribosomal protein uS4 family. As to quaternary structure, part of the 30S ribosomal subunit. Contacts protein S5. The interaction surface between S4 and S5 is involved in control of translational fidelity.

In terms of biological role, one of the primary rRNA binding proteins, it binds directly to 16S rRNA where it nucleates assembly of the body of the 30S subunit. With S5 and S12 plays an important role in translational accuracy. The polypeptide is Small ribosomal subunit protein uS4 (Cereibacter sphaeroides (strain ATCC 17025 / ATH 2.4.3) (Rhodobacter sphaeroides)).